Reading from the N-terminus, the 241-residue chain is Phosphoribosylaminoimidazole-succinocarboxamide synthase (241 aa).

Belongs to the SAICAR synthetase family.

It carries out the reaction 5-amino-1-(5-phospho-D-ribosyl)imidazole-4-carboxylate + L-aspartate + ATP = (2S)-2-[5-amino-1-(5-phospho-beta-D-ribosyl)imidazole-4-carboxamido]succinate + ADP + phosphate + 2 H(+). Its pathway is purine metabolism; IMP biosynthesis via de novo pathway; 5-amino-1-(5-phospho-D-ribosyl)imidazole-4-carboxamide from 5-amino-1-(5-phospho-D-ribosyl)imidazole-4-carboxylate: step 1/2. This is Phosphoribosylaminoimidazole-succinocarboxamide synthase from Oenococcus oeni (strain ATCC BAA-331 / PSU-1).